The chain runs to 55 residues: Large ribosomal subunit protein bL32c (55 aa).

The tract at residues 1 to 24 (MAVPKKRTSKSKKNARKANWKRKG) is disordered.

The protein belongs to the bacterial ribosomal protein bL32 family.

The protein localises to the plastid. It is found in the chloroplast. This is Large ribosomal subunit protein bL32c from Phaeodactylum tricornutum (strain CCAP 1055/1).